Reading from the N-terminus, the 160-residue chain is Cyclic pyranopterin monophosphate synthase (160 aa).

Substrate is bound by residues 75 to 77 (MCH) and 115 to 116 (ME). Residue aspartate 130 is part of the active site.

Belongs to the MoaC family. In terms of assembly, homohexamer; trimer of dimers.

The catalysed reaction is (8S)-3',8-cyclo-7,8-dihydroguanosine 5'-triphosphate = cyclic pyranopterin phosphate + diphosphate. Its pathway is cofactor biosynthesis; molybdopterin biosynthesis. Functionally, catalyzes the conversion of (8S)-3',8-cyclo-7,8-dihydroguanosine 5'-triphosphate to cyclic pyranopterin monophosphate (cPMP). The sequence is that of Cyclic pyranopterin monophosphate synthase from Lysinibacillus sphaericus (strain C3-41).